We begin with the raw amino-acid sequence, 428 residues long: Spliceosome RNA helicase Ddx39b (428 aa).

A compositionally biased stretch (acidic residues) spans 1 to 19 (MAENDVDNELLDYEDDEVE). Residues 1 to 31 (MAENDVDNELLDYEDDEVETAAGADGTEAPA) are disordered. At Ala-2 the chain carries N-acetylalanine. N6-acetyllysine; alternate is present on Lys-36. Lys-36 is covalently cross-linked (Glycyl lysine isopeptide (Lys-Gly) (interchain with G-Cter in SUMO2); alternate). Phosphoserine occurs at positions 38 and 41. The Q motif motif lies at 45-73 (SGFRDFLLKPELLRAIVDCGFEHPSEVQH). The Helicase ATP-binding domain occupies 76 to 249 (IPQAILGMDV…RKFMQDPMEI (174 aa)). An ATP-binding site is contributed by 89-96 (AKSGMGKT). Thr-172 is modified (phosphothreonine). Positions 196 to 199 (DECD) match the DECD box motif. The 162-residue stretch at 261–422 (GLQQYYVKLK…ELPDEIDISS (162 aa)) folds into the Helicase C-terminal domain.

The protein belongs to the DEAD box helicase family. DECD subfamily. In terms of assembly, homodimer, and heterodimer with DDX39A. DDX39B interacts with the THO subcomplex to form the THO-DDX39B complex which multimerizes into a 28-subunit tetrameric assembly. Component of the transcription/export (TREX) complex at least composed of ALYREF/THOC4, DDX39B, SARNP/CIP29, CHTOP and the THO subcomplex; in the complex interacts with THOC2. THOC1-THOC2-THOC3-DDX39B subcomplex is sufficient for the interaction with export factor NXF1-NXT1. TREX seems to have a dynamic structure involving ATP-dependent remodeling. Within the TREX complex bridges ALYREF/THOC4 and the THO subcomplex, and, in a ATP-dependent manner, ALYREF/THOC4 and SARNP/CIP29. Component of the spliceosome. Interacts directly with U2AF2. Interacts with RBM8A, RNPS1 and SRRM1, FYTTD1/UIF, THOC1, MX1 and POLDIP3. Interacts with LUZP4. Interacts with SARNP/CIP29 (via the C-terminal domain); the interaction is direct and facilitates RNA binding of DDX39B.

It is found in the nucleus. The protein resides in the nucleus speckle. The protein localises to the cytoplasm. The catalysed reaction is ATP + H2O = ADP + phosphate + H(+). Functionally, involved in nuclear export of spliced and unspliced mRNA. Component of the TREX complex which is thought to couple mRNA transcription, processing and nuclear export, and specifically associates with spliced mRNA and not with unspliced pre-mRNA. The TREX complex is recruited to spliced mRNAs by a transcription-independent mechanism, binds to mRNA upstream of the exon-junction complex (EJC) and is recruited in a splicing- and cap-dependent manner to a region near the 5' end of the mRNA where it functions in mRNA export to the cytoplasm via the TAP/NXF1 pathway. The THOC1-THOC2-THOC3 core complex alone is sufficient to promote ATPase activity of DDX39B; in the complex THOC2 is the only component that directly interacts with DDX39B. Associates with SARNP/CIP29, which facilitates RNA binding of DDX39B and likely plays a role in mRNA export. May undergo several rounds of ATP hydrolysis during assembly of TREX to drive subsequent loading of components such as ALYREF/THOC4 and CHTOP onto mRNA. Also associates with pre-mRNA independent of ALYREF/THOC4. Involved in the nuclear export of intronless mRNA; the ATP-bound form is proposed to recruit export adapter ALYREF/THOC4 to intronless mRNA; its ATPase activity is cooperatively stimulated by RNA and ALYREF/THOC4 and ATP hydrolysis is thought to trigger the dissociation from RNA to allow the association of ALYREF/THOC4 and the NXF1-NXT1 heterodimer. Involved in transcription elongation and genome stability. Its function is as follows. Splice factor that is required for the first ATP-dependent step in spliceosome assembly and for the interaction of U2 snRNP with the branchpoint. Has both RNA-stimulated ATP binding/hydrolysis activity and ATP-dependent RNA unwinding activity. Even with the stimulation of RNA, the ATPase activity is weak. Can only hydrolyze ATP but not other NTPs. The RNA stimulation of ATPase activity does not have a strong preference for the sequence and length of the RNA. However, ssRNA stimulates the ATPase activity much more strongly than dsRNA. Can unwind 5' or 3' overhangs or blunt end RNA duplexes in vitro. The ATPase and helicase activities are not influenced by U2AF2; the effect of ALYREF/THOC4 is reported conflictingly. The sequence is that of Spliceosome RNA helicase Ddx39b (Ddx39b) from Mus musculus (Mouse).